A 375-amino-acid polypeptide reads, in one-letter code: FK506-binding protein 4 (375 aa).

Disordered stretches follow at residues 55 to 78 (GFEDDYDEEEQEKEPKSTDEEEEI) and 127 to 265 (PPDF…SKMT). Composition is skewed to acidic residues over residues 56 to 66 (FEDDYDEEEQE) and 131 to 173 (FDQD…DPDR). Residues 196 to 216 (DSKKRAAEKPVKETAAKKLKA) show a composition bias toward basic and acidic residues. The segment covering 217–230 (DASAASAASTPTKA) has biased composition (low complexity). Positions 231 to 261 (IETKGEKQTKGAKDTKPKSETVEKKTVDKST) are enriched in basic and acidic residues. The PPIase FKBP-type domain maps to 289–375 (GQKVGMRYVG…VFDVKLVEIK (87 aa)).

It belongs to the FKBP-type PPIase family. FKBP3/4 subfamily. Binds to histones H3 and H4.

The protein localises to the nucleus. It catalyses the reaction [protein]-peptidylproline (omega=180) = [protein]-peptidylproline (omega=0). Inhibited by both FK506 and rapamycin. In terms of biological role, PPIase that acts as a histone chaperone. Histone proline isomerase that increases the rate of cis-trans isomerization at prolines on the histone H3 N-terminal tail. Proline isomerization influences H3 methylation thereby regulating gene expression. This is FK506-binding protein 4 (FPR4) from Mycosarcoma maydis (Corn smut fungus).